The primary structure comprises 700 residues: Polyribonucleotide nucleotidyltransferase (700 aa).

Residues aspartate 487 and aspartate 493 each coordinate Mg(2+). One can recognise a KH domain in the interval 554-613 (PRLLTIKIHPDKIRDVIGKGGSTIQAITKDTGTQIDIQDDGTIVIASVNNAAAREAKRRI). An S1 motif domain is found at 623 to 691 (GRIYEGKVAK…KQGRIRLSIK (69 aa)).

The protein belongs to the polyribonucleotide nucleotidyltransferase family. In terms of assembly, component of the RNA degradosome, which is a multiprotein complex involved in RNA processing and mRNA degradation. Requires Mg(2+) as cofactor.

It localises to the cytoplasm. The enzyme catalyses RNA(n+1) + phosphate = RNA(n) + a ribonucleoside 5'-diphosphate. Functionally, involved in mRNA degradation. Catalyzes the phosphorolysis of single-stranded polyribonucleotides processively in the 3'- to 5'-direction. The polypeptide is Polyribonucleotide nucleotidyltransferase (Xylella fastidiosa (strain M12)).